The primary structure comprises 647 residues: DNA mismatch repair protein MutL (647 aa).

It belongs to the DNA mismatch repair MutL/HexB family.

Functionally, this protein is involved in the repair of mismatches in DNA. It is required for dam-dependent methyl-directed DNA mismatch repair. May act as a 'molecular matchmaker', a protein that promotes the formation of a stable complex between two or more DNA-binding proteins in an ATP-dependent manner without itself being part of a final effector complex. The polypeptide is DNA mismatch repair protein MutL (Bacillus cereus (strain G9842)).